A 504-amino-acid chain; its full sequence is Arabinose import ATP-binding protein AraG (504 aa).

2 consecutive ABC transporter domains span residues 8 to 243 (LSFR…MVGR) and 256 to 499 (YGEE…MPKV). Residue 40 to 47 (GENGAGKS) participates in ATP binding.

Belongs to the ABC transporter superfamily. Arabinose importer (TC 3.A.1.2.2) family. The complex is composed of two ATP-binding proteins (AraG), two transmembrane proteins (AraH) and a solute-binding protein (AraF).

Its subcellular location is the cell inner membrane. It catalyses the reaction L-arabinose(out) + ATP + H2O = L-arabinose(in) + ADP + phosphate + H(+). In terms of biological role, part of the ABC transporter complex AraFGH involved in arabinose import. Responsible for energy coupling to the transport system. The polypeptide is Arabinose import ATP-binding protein AraG (Shigella dysenteriae serotype 1 (strain Sd197)).